The following is a 368-amino-acid chain: 3-isopropylmalate dehydrogenase (368 aa).

77 to 88 (GPKWGTGAVRPE) is a binding site for NAD(+). Substrate is bound by residues R95, R105, R134, and D226. The Mg(2+) site is built by D226, D251, and D255. 290–301 (GSAPDLPANKVN) provides a ligand contact to NAD(+).

Belongs to the isocitrate and isopropylmalate dehydrogenases family. In terms of assembly, homodimer. The cofactor is Mg(2+). Requires Mn(2+) as cofactor.

It localises to the cytoplasm. The enzyme catalyses (2R,3S)-3-isopropylmalate + NAD(+) = 4-methyl-2-oxopentanoate + CO2 + NADH. It functions in the pathway amino-acid biosynthesis; L-leucine biosynthesis; L-leucine from 3-methyl-2-oxobutanoate: step 3/4. Functionally, catalyzes the oxidation of 3-carboxy-2-hydroxy-4-methylpentanoate (3-isopropylmalate) to 3-carboxy-4-methyl-2-oxopentanoate. The product decarboxylates to 4-methyl-2 oxopentanoate. The chain is 3-isopropylmalate dehydrogenase (LEU2) from Kodamaea ohmeri (Yeast).